A 400-amino-acid chain; its full sequence is Imidazolonepropionase (400 aa).

His68 and His70 together coordinate Fe(3+). Zn(2+) is bound by residues His68 and His70. The 4-imidazolone-5-propanoate site is built by Arg77, Tyr140, and His173. An N-formimidoyl-L-glutamate-binding site is contributed by Tyr140. His238 is a binding site for Fe(3+). Residue His238 participates in Zn(2+) binding. Gln241 serves as a coordination point for 4-imidazolone-5-propanoate. Asp313 is a binding site for Fe(3+). Asp313 lines the Zn(2+) pocket. Residues Asn315 and Gly317 each coordinate N-formimidoyl-L-glutamate. 4-imidazolone-5-propanoate is bound at residue Thr318.

The protein belongs to the metallo-dependent hydrolases superfamily. HutI family. Zn(2+) is required as a cofactor. The cofactor is Fe(3+).

Its subcellular location is the cytoplasm. It carries out the reaction 4-imidazolone-5-propanoate + H2O = N-formimidoyl-L-glutamate. It participates in amino-acid degradation; L-histidine degradation into L-glutamate; N-formimidoyl-L-glutamate from L-histidine: step 3/3. In terms of biological role, catalyzes the hydrolytic cleavage of the carbon-nitrogen bond in imidazolone-5-propanoate to yield N-formimidoyl-L-glutamate. It is the third step in the universal histidine degradation pathway. This chain is Imidazolonepropionase, found in Paracoccus denitrificans (strain Pd 1222).